The chain runs to 635 residues: Chaperone protein HtpG (635 aa).

Residues 1 to 336 form an a; substrate-binding region; it reads MTTAEAAAPE…SADLPLNLSR (336 aa). A b region spans residues 337 to 556; that stretch reads EMLQDSAILA…ESGIDRRLEK (220 aa). Residues 557–635 are c; that stretch reads LLASAGRLGD…RVMQRGLPTA (79 aa).

The protein belongs to the heat shock protein 90 family. As to quaternary structure, homodimer.

The protein localises to the cytoplasm. In terms of biological role, molecular chaperone. Has ATPase activity. The sequence is that of Chaperone protein HtpG from Azorhizobium caulinodans (strain ATCC 43989 / DSM 5975 / JCM 20966 / LMG 6465 / NBRC 14845 / NCIMB 13405 / ORS 571).